The sequence spans 164 residues: Photosystem II extrinsic protein V (164 aa).

The N-terminal stretch at 1 to 27 is a signal peptide; the sequence is MALKSKFLVGSILATFILNGFSSPAQA. The heme c site is built by cysteine 64, cysteine 67, histidine 68, and histidine 119.

Belongs to the cytochrome c family. PsbV subfamily. In terms of assembly, PSII is composed of 1 copy each of membrane proteins PsbA, PsbB, PsbC, PsbD, PsbE, PsbF, PsbH, PsbI, PsbJ, PsbK, PsbL, PsbM, PsbT, PsbY, PsbZ, Psb30/Ycf12, at least 3 peripheral proteins of the oxygen-evolving complex and a large number of cofactors. It forms dimeric complexes. Heme c serves as cofactor.

The protein localises to the plastid. The protein resides in the chloroplast thylakoid membrane. One of the extrinsic, lumenal subunits of photosystem II (PSII). PSII is a light-driven water plastoquinone oxidoreductase, using light energy to abstract electrons from H(2)O, generating a proton gradient subsequently used for ATP formation. The extrinsic proteins stabilize the structure of photosystem II oxygen-evolving complex (OEC), the ion environment of oxygen evolution and protect the OEC against heat-induced inactivation. This Emiliania huxleyi (Coccolithophore) protein is Photosystem II extrinsic protein V.